A 363-amino-acid chain; its full sequence is Aminomethyltransferase (363 aa).

It belongs to the GcvT family. As to quaternary structure, the glycine cleavage system is composed of four proteins: P, T, L and H.

The enzyme catalyses N(6)-[(R)-S(8)-aminomethyldihydrolipoyl]-L-lysyl-[protein] + (6S)-5,6,7,8-tetrahydrofolate = N(6)-[(R)-dihydrolipoyl]-L-lysyl-[protein] + (6R)-5,10-methylene-5,6,7,8-tetrahydrofolate + NH4(+). In terms of biological role, the glycine cleavage system catalyzes the degradation of glycine. This is Aminomethyltransferase from Staphylococcus haemolyticus (strain JCSC1435).